A 198-amino-acid chain; its full sequence is Recombination protein RecR (198 aa).

The segment at 57–72 (CSVCGHITENDPCYIC) adopts a C4-type zinc-finger fold. In terms of domain architecture, Toprim spans 80–175 (SVICVVEDDK…KVTRLAQGLS (96 aa)).

It belongs to the RecR family.

In terms of biological role, may play a role in DNA repair. It seems to be involved in an RecBC-independent recombinational process of DNA repair. It may act with RecF and RecO. This chain is Recombination protein RecR, found in Staphylococcus aureus (strain MRSA252).